The sequence spans 403 residues: Argininosuccinate synthase (403 aa).

9–17 (AYSGGLDTS) is a binding site for ATP. Tyr86 contributes to the L-citrulline binding site. Gly116 provides a ligand contact to ATP. Thr118, Asn122, and Asp123 together coordinate L-aspartate. L-citrulline is bound at residue Asn122. Residues Arg126, Ser174, Glu259, and Tyr271 each coordinate L-citrulline.

This sequence belongs to the argininosuccinate synthase family. Type 1 subfamily. In terms of assembly, homotetramer.

The protein localises to the cytoplasm. It catalyses the reaction L-citrulline + L-aspartate + ATP = 2-(N(omega)-L-arginino)succinate + AMP + diphosphate + H(+). Its pathway is amino-acid biosynthesis; L-arginine biosynthesis; L-arginine from L-ornithine and carbamoyl phosphate: step 2/3. This Ligilactobacillus salivarius (strain UCC118) (Lactobacillus salivarius) protein is Argininosuccinate synthase.